Consider the following 264-residue polypeptide: Phosphonoacetaldehyde hydrolase (264 aa).

The Nucleophile role is filled by D9. D9 and A11 together coordinate Mg(2+). Residue K50 is the Schiff-base intermediate with substrate of the active site. D183 contributes to the Mg(2+) binding site.

This sequence belongs to the HAD-like hydrolase superfamily. PhnX family. Homodimer. Mg(2+) is required as a cofactor.

It catalyses the reaction phosphonoacetaldehyde + H2O = acetaldehyde + phosphate + H(+). In terms of biological role, involved in phosphonate degradation. This chain is Phosphonoacetaldehyde hydrolase, found in Bacillus cereus (strain G9842).